The sequence spans 408 residues: DRPRPARLSHARFSKNHSGRTHSMKDKAGRKHRPLDVFDFPDHSQLSSFSRLGENEKDEESYETFDPPLHSTAIYADEEEFSKQCGSHLPSTPQEKEAKRSSDTSEIEASENESVKISAKKPRRKLKPISDESESPEESDVRRKVKPTENISTQHEAVSATALPGLSEKPAEAVTPQKTGPQSAESSAEKATLATEHQLETQKNKMLPGKRKKPRSYTTDTSDCAPVWCLKEKKASEIMELDVFLSAFENILLEYEQKIDSRVCKAAINKFHSNLKEELIKMVQEIQMLKTLKRKNAKIISNIEKKRQRLIEVQDELLQVEPELKQLQIKYEELQERKASLRKAAYFLSNLKQLHQDYSDVQEEEPSVKETYDSSSLPALLFKARPLLGAEHHLQNINYQLENLLDQK.

Residues 1 to 33 show a composition bias toward basic residues; the sequence is DRPRPARLSHARFSKNHSGRTHSMKDKAGRKHR. Positions 1 to 218 are disordered; the sequence is DRPRPARLSH…GKRKKPRSYT (218 aa). Threonine 72 is subject to Phosphothreonine; by PLK1. At threonine 92 the chain carries Phosphothreonine. The span at 94–103 shows a compositional bias: basic and acidic residues; that stretch reads QEKEAKRSSD. Phosphoserine is present on serine 102. A Phosphothreonine modification is found at threonine 104. A phosphoserine mark is found at serine 105, serine 110, and serine 114. A compositionally biased stretch (basic residues) spans 118 to 127; sequence SAKKPRRKLK. 3 positions are modified to phosphoserine: serine 130, serine 133, and serine 135. Polar residues predominate over residues 176-186; the sequence is PQKTGPQSAES. Lysine 178 participates in a covalent cross-link: Glycyl lysine isopeptide (Lys-Gly) (interchain with G-Cter in SUMO2). 2 positions are modified to phosphoserine: serine 183 and serine 187. Threonine 192 bears the Phosphothreonine mark. Residue serine 222 is modified to Phosphoserine. Residues 273-350 adopt a coiled-coil conformation; sequence SNLKEELIKM…LRKAAYFLSN (78 aa). Positions 293–310 match the Nuclear localization signal motif; it reads KRKNAKIISNIEKKRQRL.

This sequence belongs to the CENP-U/AME1 family. As to quaternary structure, component of the CENPA-NAC complex, at least composed of CENPA, CENPC, CENPH, CENPM, CENPN, CENPT and CENPU. The CENPA-NAC complex interacts with the CENPA-CAD complex, composed of CENPI, CENPK, CENPL, CENPO, CENPP, CENPQ, CENPR and CENPS. Interacts with MLF1. Phosphorylated by PLK1 at Thr-72, creating a self-tethering site that specifically interacts with the polo-box domain of PLK1.

It localises to the cytoplasm. The protein resides in the nucleus. It is found in the chromosome. Its subcellular location is the centromere. The protein localises to the kinetochore. Functionally, component of the CENPA-NAC (nucleosome-associated) complex, a complex that plays a central role in assembly of kinetochore proteins, mitotic progression and chromosome segregation. The CENPA-NAC complex recruits the CENPA-CAD (nucleosome distal) complex and may be involved in incorporation of newly synthesized CENPA into centromeres. Plays an important role in the correct PLK1 localization to the mitotic kinetochores. A scaffold protein responsible for the initial recruitment and maintenance of the kinetochore PLK1 population until its degradation. Involved in transcriptional repression. The chain is Centromere protein U (CENPU) from Bos taurus (Bovine).